The sequence spans 176 residues: Outer membrane protein assembly factor BamE (176 aa).

Residues 1 to 21 (MQNAKLMLTCLAFAGLAALAG) form the signal peptide. The N-palmitoyl cysteine moiety is linked to residue Cys22. A lipid anchor (S-diacylglycerol cysteine) is attached at Cys22. Positions 121-176 (KEGSTTVTQPADQQKPEAQKEEPPKPGSTLEQLQREVDEAQPVPVPTPEPLDPSPQ) are disordered. Residues 123-132 (GSTTVTQPAD) are compositionally biased toward polar residues. The segment covering 134–144 (QKPEAQKEEPP) has biased composition (basic and acidic residues). The segment covering 163-176 (VPVPTPEPLDPSPQ) has biased composition (pro residues).

It belongs to the BamE family. As to quaternary structure, part of the Bam complex.

The protein resides in the cell outer membrane. Part of the outer membrane protein assembly complex, which is involved in assembly and insertion of beta-barrel proteins into the outer membrane. May have a structural role in maintaining the cell envelope integrity. The polypeptide is Outer membrane protein assembly factor BamE (Pseudomonas aeruginosa (strain ATCC 15692 / DSM 22644 / CIP 104116 / JCM 14847 / LMG 12228 / 1C / PRS 101 / PAO1)).